The primary structure comprises 457 residues: Phosphoglucosamine mutase (457 aa).

Serine 103 serves as the catalytic Phosphoserine intermediate. Mg(2+)-binding residues include serine 103, aspartate 244, aspartate 246, and aspartate 248. Serine 103 carries the post-translational modification Phosphoserine.

Belongs to the phosphohexose mutase family. It depends on Mg(2+) as a cofactor. Post-translationally, activated by phosphorylation.

The catalysed reaction is alpha-D-glucosamine 1-phosphate = D-glucosamine 6-phosphate. Functionally, catalyzes the conversion of glucosamine-6-phosphate to glucosamine-1-phosphate. The polypeptide is Phosphoglucosamine mutase (Granulibacter bethesdensis (strain ATCC BAA-1260 / CGDNIH1)).